A 626-amino-acid chain; its full sequence is Lipid-A-disaccharide synthase (626 aa).

Residues 1-225 are unknown; the sequence is MLPLYLVHVL…YKKSRLPKFH (225 aa). The interval 226–626 is lipid-A-disaccharide synthase; the sequence is SPSCFLSAGE…KEFHPKSSRA (401 aa).

It in the C-terminal section; belongs to the LpxB family.

It catalyses the reaction a lipid X + a UDP-2-N,3-O-bis[(3R)-3-hydroxyacyl]-alpha-D-glucosamine = a lipid A disaccharide + UDP + H(+). The protein operates within bacterial outer membrane biogenesis; LPS lipid A biosynthesis. Condensation of UDP-2,3-diacylglucosamine and 2,3-diacylglucosamine-1-phosphate to form lipid A disaccharide, a precursor of lipid A, a phosphorylated glycolipid that anchors the lipopolysaccharide to the outer membrane of the cell. The sequence is that of Lipid-A-disaccharide synthase (lpxB) from Chlamydia caviae (strain ATCC VR-813 / DSM 19441 / 03DC25 / GPIC) (Chlamydophila caviae).